Reading from the N-terminus, the 216-residue chain is 2-hydroxy-3-keto-5-methylthiopentenyl-1-phosphate phosphatase (216 aa).

The protein belongs to the HAD-like hydrolase superfamily. MtnX family.

The catalysed reaction is 2-hydroxy-5-methylsulfanyl-3-oxopent-1-enyl phosphate + H2O = 1,2-dihydroxy-5-(methylsulfanyl)pent-1-en-3-one + phosphate. Its pathway is amino-acid biosynthesis; L-methionine biosynthesis via salvage pathway; L-methionine from S-methyl-5-thio-alpha-D-ribose 1-phosphate: step 4/6. In terms of biological role, dephosphorylates 2-hydroxy-3-keto-5-methylthiopentenyl-1-phosphate (HK-MTPenyl-1-P) yielding 1,2-dihydroxy-3-keto-5-methylthiopentene (DHK-MTPene). The polypeptide is 2-hydroxy-3-keto-5-methylthiopentenyl-1-phosphate phosphatase (Exiguobacterium sp. (strain ATCC BAA-1283 / AT1b)).